The primary structure comprises 387 residues: 3-ketoacyl-CoA thiolase (387 aa).

The Acyl-thioester intermediate role is filled by cysteine 91. Catalysis depends on proton acceptor residues histidine 343 and cysteine 373.

It belongs to the thiolase-like superfamily. Thiolase family. As to quaternary structure, heterotetramer of two alpha chains (FadB) and two beta chains (FadA).

It is found in the cytoplasm. It carries out the reaction an acyl-CoA + acetyl-CoA = a 3-oxoacyl-CoA + CoA. It participates in lipid metabolism; fatty acid beta-oxidation. Catalyzes the final step of fatty acid oxidation in which acetyl-CoA is released and the CoA ester of a fatty acid two carbons shorter is formed. The chain is 3-ketoacyl-CoA thiolase from Yersinia enterocolitica serotype O:8 / biotype 1B (strain NCTC 13174 / 8081).